Consider the following 122-residue polypeptide: uncharacterized protein (122 aa).

The protein to B.subtilis YpdA.

This is an uncharacterized protein from Bacillus licheniformis.